The chain runs to 96 residues: Co-chaperonin GroES (96 aa).

The protein belongs to the GroES chaperonin family. Heptamer of 7 subunits arranged in a ring. Interacts with the chaperonin GroEL.

The protein resides in the cytoplasm. Functionally, together with the chaperonin GroEL, plays an essential role in assisting protein folding. The GroEL-GroES system forms a nano-cage that allows encapsulation of the non-native substrate proteins and provides a physical environment optimized to promote and accelerate protein folding. GroES binds to the apical surface of the GroEL ring, thereby capping the opening of the GroEL channel. This Photobacterium profundum (strain SS9) protein is Co-chaperonin GroES.